We begin with the raw amino-acid sequence, 80 residues long: RNA-binding protein Hfq (80 aa).

A Sm domain is found at 9 to 68 (EPFLNALRKERIPVSIYLVNGIKLQGQIDSFDQFVVLLKNTVSQMVYKHAISTIVPSRPV).

This sequence belongs to the Hfq family. Homohexamer.

RNA chaperone that binds small regulatory RNA (sRNAs) and mRNAs to facilitate mRNA translational regulation in response to envelope stress, environmental stress and changes in metabolite concentrations. Also binds with high specificity to tRNAs. The polypeptide is RNA-binding protein Hfq (Thioalkalivibrio sulfidiphilus (strain HL-EbGR7)).